Here is a 302-residue protein sequence, read N- to C-terminus: Polyamine aminopropyltransferase (302 aa).

One can recognise a PABS domain in the interval 4–239; it reads WTWHLEWQTP…GLWGFIYASD (236 aa). Residue Q33 coordinates S-methyl-5'-thioadenosine. Spermidine contacts are provided by H64 and E88. S-methyl-5'-thioadenosine-binding positions include D108 and 140–141; that span reads DG. Residue D158 is the Proton acceptor of the active site. P167 lines the S-methyl-5'-thioadenosine pocket.

This sequence belongs to the spermidine/spermine synthase family. In terms of assembly, homodimer or homotetramer.

It localises to the cytoplasm. It catalyses the reaction S-adenosyl 3-(methylsulfanyl)propylamine + putrescine = S-methyl-5'-thioadenosine + spermidine + H(+). It functions in the pathway amine and polyamine biosynthesis; spermidine biosynthesis; spermidine from putrescine: step 1/1. Its function is as follows. Catalyzes the irreversible transfer of a propylamine group from the amino donor S-adenosylmethioninamine (decarboxy-AdoMet) to putrescine (1,4-diaminobutane) to yield spermidine. This Sulfolobus acidocaldarius (strain ATCC 33909 / DSM 639 / JCM 8929 / NBRC 15157 / NCIMB 11770) protein is Polyamine aminopropyltransferase.